A 344-amino-acid chain; its full sequence is Probable pectinesterase 67 (344 aa).

The first 23 residues, 1–23, serve as a signal peptide directing secretion; it reads MGHRTRMILVLTLVVMSIWGSDA. N43 and N151 each carry an N-linked (GlcNAc...) asparagine glycan. Position 152 (Q152) interacts with substrate. D196 serves as the catalytic Nucleophile. R256 provides a ligand contact to substrate. N282 is a glycosylation site (N-linked (GlcNAc...) asparagine).

The protein belongs to the pectinesterase family. In terms of tissue distribution, expressed in flower buds.

It is found in the secreted. It localises to the cell wall. It catalyses the reaction [(1-&gt;4)-alpha-D-galacturonosyl methyl ester](n) + n H2O = [(1-&gt;4)-alpha-D-galacturonosyl](n) + n methanol + n H(+). The protein operates within glycan metabolism; pectin degradation; 2-dehydro-3-deoxy-D-gluconate from pectin: step 1/5. Functionally, acts in the modification of cell walls via demethylesterification of cell wall pectin. This chain is Probable pectinesterase 67 (PME67), found in Arabidopsis thaliana (Mouse-ear cress).